The following is a 738-amino-acid chain: Glycogen [starch] synthase, muscle (738 aa).

Residue Ser-8 is modified to Phosphoserine; by AMPK and PKA. Ser-11 is subject to Phosphoserine. Lys-39 serves as a coordination point for UDP. 2 residues coordinate UDP-alpha-D-glucose: His-205 and Arg-211. Alpha-D-glucose 6-phosphate-binding residues include His-291, Glu-292, Gln-294, His-297, and Lys-301. Arg-331 contributes to the UDP binding site. Arg-331 is a binding site for UDP-alpha-D-glucose. Residue Ser-412 is modified to Phosphoserine. His-501 contacts alpha-D-glucose 6-phosphate. 3 residues coordinate UDP-alpha-D-glucose: Glu-510, Trp-512, and Gly-513. Thr-515 contributes to the UDP binding site. Arg-582 and Arg-586 together coordinate alpha-D-glucose 6-phosphate. Residues 632-738 (QGYRYPRPAS…PTSSLGEERN (107 aa)) are disordered. Phosphoserine occurs at positions 641 and 645. A Phosphoserine; by GSK3-alpha and GSK3-beta modification is found at Ser-649. Ser-652, Ser-653, Ser-657, and Ser-672 each carry phosphoserine. The segment covering 682 to 695 (AKDRRNIRAPEWPR) has biased composition (basic and acidic residues). Ser-698, Ser-709, and Ser-711 each carry phosphoserine. Over residues 698–738 (SCSSSTGGSKRSNSVDTGPSSSLSTPTEPLSPTSSLGEERN) the composition is skewed to low complexity. Residue Thr-722 is modified to Phosphothreonine. Phosphoserine is present on residues Ser-728 and Ser-732.

It belongs to the glycosyltransferase 3 family. Part of the GYS1-GYG1 complex, a heterooctamer composed of a tetramer of GYS1 and 2 dimers of GYG1, where each GYS1 protomer binds to one GYG1 subunit (via GYG1 C-terminus); the GYS1 tetramer may dissociate from GYG1 dimers to continue glycogen polymerization on its own. Post-translationally, phosphorylation at Ser-8 by AMPK inactivates the enzyme activity. Primed phosphorylation at Ser-657 (site 5) by CSNK2A1 and CSNK2A2 is required for inhibitory phosphorylation at Ser-641 (site 3a), Ser-645 (site 3b), Ser-649 (site 3c) and Ser-653 (site 4) by GSK3A an GSK3B. Phosphorylated at Ser-641 by PASK, leading to inactivation; phosphorylation by PASK is inhibited by glycogen. Phosphorylated at Ser-641 by DYRK2, leading to inactivation. Dephosphorylation at Ser-641 and Ser-645 by PP1 activates the enzyme.

It catalyses the reaction [(1-&gt;4)-alpha-D-glucosyl](n) + UDP-alpha-D-glucose = [(1-&gt;4)-alpha-D-glucosyl](n+1) + UDP + H(+). Its pathway is glycan biosynthesis; glycogen biosynthesis. Allosteric activation by glucose-6-phosphate. Phosphorylation reduces the activity towards UDP-glucose. When in the non-phosphorylated state, glycogen synthase does not require glucose-6-phosphate as an allosteric activator; when phosphorylated it does. Its function is as follows. Glycogen synthase participates in the glycogen biosynthetic process along with glycogenin and glycogen branching enzyme. Extends the primer composed of a few glucose units formed by glycogenin by adding new glucose units to it. In this context, glycogen synthase transfers the glycosyl residue from UDP-Glc to the non-reducing end of alpha-1,4-glucan. This Rattus norvegicus (Rat) protein is Glycogen [starch] synthase, muscle (Gys1).